A 1657-amino-acid polypeptide reads, in one-letter code: Putative serine/threonine-protein kinase/receptor R826 (1657 aa).

The N-terminal stretch at 1-23 is a signal peptide; it reads MRLNSQIVFCIVVVISCLSMIEC. 9 N-linked (GlcNAc...) asparagine; by host glycosylation sites follow: Asn153, Asn178, Asn238, Asn255, Asn352, Asn454, Asn476, Asn494, and Asn596. A helical transmembrane segment spans residues 742–762; it reads IILAVVIPIAFIIVCIICILV. The Protein kinase 1 domain occupies 786–1049; it reads LELGEQLGTG…EIMTRLSNLM (264 aa). Residues 792–800 and Lys813 each bind ATP; that span reads LGTGAFGEV. The Proton acceptor role is filled by Asp909. The interval 1089–1115 is disordered; that stretch reads VQNSYNRTDSYDLGSNNSHSSITSDTN. Positions 1134-1277 constitute a Guanylate cyclase domain; sequence VVVFTDIISA…PTVTTAAAVT (144 aa). Residues 1399-1651 form the Protein kinase 2 domain; the sequence is IKMGEQIGLG…DDVIIVLAKF (253 aa). ATP-binding positions include 1405-1413 and Lys1426; that span reads IGLGSYGVV. Asp1522 (proton acceptor) is an active-site residue.

Its subcellular location is the membrane. The catalysed reaction is L-seryl-[protein] + ATP = O-phospho-L-seryl-[protein] + ADP + H(+). It carries out the reaction L-threonyl-[protein] + ATP = O-phospho-L-threonyl-[protein] + ADP + H(+). In Acanthamoeba polyphaga mimivirus (APMV), this protein is Putative serine/threonine-protein kinase/receptor R826.